The sequence spans 336 residues: MVKIAVIGAGVVGLSTALQVKQNFPFCSVTVVAEKFNTETTSDGAGGLFRPNFLTLSANPLESIKQWSQDTFSHFNNLFNSPEASDCGIALMSGFLLSNKEKLDMIEDISLGQSKMTAEQIAKMGFDCKHVTKVLTYTMECRRYMPWLTSKFLSLGGSMHHHRLKSLEELVGVYDVVVNCSGLGAKDLVPDPLVYPVKGQLIQVEAPWVKHFYFFEDDTYVIPNINRTSLGGIRIKNDYSTEVDPEISKSIWQRCTSRIPSLQKAKVLWEWAGLRPHRDPIRIEQDVMNFPKGTLKVVHNYGHGANGVSLSWGTAKHATRLVRQFLENDPELRSKL.

7 residues coordinate FAD: E34, K35, T41, S42, G304, V308, and S309. Residues 334-336 (SKL) carry the Microbody targeting signal motif.

This sequence belongs to the DAMOX/DASOX family. As to quaternary structure, monomer. FAD is required as a cofactor.

It is found in the peroxisome matrix. The catalysed reaction is D-aspartate + O2 + H2O = oxaloacetate + H2O2 + NH4(+). It catalyses the reaction D-glutamate + O2 + H2O = H2O2 + 2-oxoglutarate + NH4(+). Selectively catalyzes the oxidative deamination of acidic amino acids. Suppresses the level of D-aspartate in the brain, an amino acid that can act as an agonist for glutamate receptors. Protects the organism from the toxicity of D-amino acids. May also function in the intestine. The protein is D-aspartate oxidase of Octopus vulgaris (Common octopus).